Reading from the N-terminus, the 470-residue chain is ESX-4 secretion system ATPase EccB4 (470 aa).

Residues 44 to 64 (LALGCVLAIVAAMGCAFVALL) form a helical membrane-spanning segment.

It belongs to the EccB family. Part of the ESX-4 / type VII secretion system (T7SS), which is composed of cytosolic and membrane components.

The protein localises to the cell membrane. Its function is as follows. An ATPase. The chain is ESX-4 secretion system ATPase EccB4 (eccB4) from Mycobacterium tuberculosis (strain CDC 1551 / Oshkosh).